A 471-amino-acid polypeptide reads, in one-letter code: E3 SUMO-protein ligase EGR2 (471 aa).

Residues 127–143 (PASTTASSNVTSASPNP) show a composition bias toward low complexity. The segment at 127–177 (PASTTASSNVTSASPNPLATGPLGVCTMSQTQPDLDHLYSPPPPPPYSGCA) is disordered. K246 is subject to N6-acetyllysine; by EP300. 2 disordered regions span residues 273 to 301 (GGPS…AAAA) and 313 to 336 (RPIL…RPYP). Residues 280–289 (TGPGASGGSE) show a composition bias toward gly residues. 3 consecutive C2H2-type zinc fingers follow at residues 335-359 (YPCP…IRIH), 365-387 (FQCR…IRTH), and 393-415 (FACD…TKIH). Residues 406 to 471 (DERKRHTKIH…GPCSSRTRTP (66 aa)) form a disordered region. The segment covering 410 to 420 (RHTKIHLRQKE) has biased composition (basic residues). A compositionally biased stretch (low complexity) spans 424–437 (SAPSSSVPAASTAS).

The protein belongs to the EGR C2H2-type zinc-finger protein family. In terms of assembly, interacts with HCFC1. Interacts with WWP2. Interacts with UBC9. Interacts with CITED1. Interacts (via phosphorylated form) with SFN. In terms of processing, ubiquitinated by WWP2 leading to proteasomal degradation. Post-translationally, acetylated at Lys-246. May be deacetylated by HDAC6, HDAC10 or SIRT1.

Its subcellular location is the nucleus. The protein operates within protein modification; protein sumoylation. In terms of biological role, sequence-specific DNA-binding transcription factor. Plays a role in hindbrain segmentation by regulating the expression of a subset of homeobox containing genes and in Schwann cell myelination by regulating the expression of genes involved in the formation and maintenance of myelin. Binds to two EGR2-consensus sites EGR2A (5'-CTGTAGGAG-3') and EGR2B (5'-ATGTAGGTG-3') in the HOXB3 enhancer and promotes HOXB3 transcriptional activation. Binds to specific DNA sites located in the promoter region of HOXA4, HOXB2 and ERBB2. Regulates hindbrain segmentation by controlling the expression of Hox genes, such as HOXA4, HOXB3 and HOXB2, and thereby specifying odd and even rhombomeres. Promotes the expression of HOXB3 in the rhombomere r5 in the hindbrain. Regulates myelination in the peripheral nervous system after birth, possibly by regulating the expression of myelin proteins, such as MPZ, and by promoting the differentiation of Schwann cells. Involved in the development of the jaw openener musculature, probably by playing a role in its innervation through trigeminal motor neurons. May play a role in adipogenesis, possibly by regulating the expression of CEBPB. Its function is as follows. E3 SUMO-protein ligase helping SUMO1 conjugation to its coregulators NAB1 and NAB2, whose sumoylation down-regulates EGR2 transcriptional activity. This is E3 SUMO-protein ligase EGR2 (EGR2) from Sus scrofa (Pig).